Here is a 1257-residue protein sequence, read N- to C-terminus: RAF-like serine/threonine-protein kinase 24 (1257 aa).

Residues 1–21 form a disordered region; the sequence is MDQAKGYEHVRYTAPDPRDEG. In terms of domain architecture, PB1 spans 191–277; it reads PRDQKLRYVG…EKPRMFLFSS (87 aa). Composition is skewed to basic and acidic residues over residues 457-480 and 493-502; these read VQDPETSSKEAKMRRDDSFQKVND and KEPKMRRESS. Disordered regions lie at residues 457 to 629 and 761 to 789; these read VQDP…RTSQ and SQSEKKNVETNTPEHVSQTETSAKAVPQG. Position 474 is a phosphoserine (Ser-474). Low complexity predominate over residues 533-548; sequence TQTSSSTPDPSSSTLS. The segment covering 550–576 has biased composition (basic and acidic residues); it reads KSLRKSEDHVENNLSAKEPKMRKEHST. Ser-555 is modified (phosphoserine). The span at 583-593 shows a compositional bias: low complexity; the sequence is SVSSVSSDSMV. Over residues 769-782 the composition is skewed to polar residues; sequence ETNTPEHVSQTETS. Phosphoserine is present on Ser-777. Positions 974-1239 constitute a Protein kinase domain; the sequence is LEELKELGSG…PEIARRLRTM (266 aa). ATP is bound by residues 980-988 and Lys-1001; that span reads LGSGTFGTV. Residue Ser-1013 is modified to Phosphoserine. Asp-1102 functions as the Proton acceptor in the catalytic mechanism.

The protein belongs to the protein kinase superfamily. Ser/Thr protein kinase family. Hyperphosphorylated in response to auxin in an ABP1- and TMK1-dependent manner.

The protein resides in the cytoplasm. The enzyme catalyses L-seryl-[protein] + ATP = O-phospho-L-seryl-[protein] + ADP + H(+). The catalysed reaction is L-threonyl-[protein] + ATP = O-phospho-L-threonyl-[protein] + ADP + H(+). With respect to regulation, activated by auxin via rapid phosphorylation downstream of ABP1 and TMK1 signaling. Its function is as follows. RAF-like protein kinase acting, together with RAF20, as a central mediator of a fast response pathway to auxin involving proteins phosphorylation, and leading to rapid cellular responses including membrane depolarization and cytoplasmic streaming. Required for general growth and developmental process. The chain is RAF-like serine/threonine-protein kinase 24 from Arabidopsis thaliana (Mouse-ear cress).